The primary structure comprises 122 residues: Large ribosomal subunit protein bL12 (122 aa).

This sequence belongs to the bacterial ribosomal protein bL12 family. In terms of assembly, homodimer. Part of the ribosomal stalk of the 50S ribosomal subunit. Forms a multimeric L10(L12)X complex, where L10 forms an elongated spine to which 2 to 4 L12 dimers bind in a sequential fashion. Binds GTP-bound translation factors.

Functionally, forms part of the ribosomal stalk which helps the ribosome interact with GTP-bound translation factors. Is thus essential for accurate translation. The sequence is that of Large ribosomal subunit protein bL12 from Staphylococcus saprophyticus subsp. saprophyticus (strain ATCC 15305 / DSM 20229 / NCIMB 8711 / NCTC 7292 / S-41).